The primary structure comprises 738 residues: Dipeptidyl peptidase 3 (738 aa).

At Ala2 the chain carries N-acetylalanine. Residue His450 coordinates Zn(2+). The active site involves Glu451. The Zn(2+) site is built by His455 and Glu508.

The protein belongs to the peptidase M49 family. The cofactor is Zn(2+).

The protein resides in the cytoplasm. It catalyses the reaction Release of an N-terminal dipeptide from a peptide comprising four or more residues, with broad specificity. Also acts on dipeptidyl 2-naphthylamides.. With respect to regulation, inhibited by spinorphin, an opioid peptide derived from hemoglobin. In terms of biological role, cleaves and degrades bioactive peptides, including angiotensin, Leu-enkephalin and Met-enkephalin. Also cleaves Arg-Arg-beta-naphthylamide. The polypeptide is Dipeptidyl peptidase 3 (Dpp3) (Rattus norvegicus (Rat)).